We begin with the raw amino-acid sequence, 481 residues long: MSAAEGPLVVGVDTSTQSTKALVVDAATGRVVASGQAPHTVSSGTGRESDPRQWWDALGEALSQCGEAAREAAAVSVGGQQHGLVTLDARGEPVRPALLWNDVRSAPQARRLIDELGGAKAWAERTGSVPSASFTVTKWAWLTEHEPEAARAVKAVRLPHDYLTERLTGEGTTDRGDVSGTGWWASGTEAYDEEILARVALDPALLPRVVRPGEVAGTVRDGHGLPFSKGTLVAAGTGDNAAAALGLGLRPGVPVMSLGTSGTAYAVSQRRPADPTGTVAGFADARGDWLPLACTLNCTLAVDRVASLLGLDREAVEPGTDVTLLPFLDGERTPNLPHSSGLLHGLRHDTTAGQLLQAAYDGAVHSLLGALDLVLDADADPSAPLLLIGGGARGTAWQQTVRRLSGRPVQIPEARELVALGAAAQAAGLLTGEDAAAVARRWNTAAGPVLDAVERDEATLNRITGVLSDAAPLLERDAASR.

81–82 (QH) is a binding site for substrate. Aspartate 239 functions as the Proton acceptor in the catalytic mechanism.

Belongs to the FGGY kinase family.

It catalyses the reaction D-xylulose + ATP = D-xylulose 5-phosphate + ADP + H(+). Its function is as follows. Catalyzes the phosphorylation of D-xylulose to D-xylulose 5-phosphate. The protein is Xylulose kinase of Streptomyces coelicolor (strain ATCC BAA-471 / A3(2) / M145).